A 151-amino-acid chain; its full sequence is Small ribosomal subunit protein uS15 (151 aa).

The segment at 1–20 (MARLHSGKRGSSGSTKPLRT) is disordered.

This sequence belongs to the universal ribosomal protein uS15 family. As to quaternary structure, part of the 30S ribosomal subunit.

This is Small ribosomal subunit protein uS15 from Methanococcus vannielii (strain ATCC 35089 / DSM 1224 / JCM 13029 / OCM 148 / SB).